A 359-amino-acid polypeptide reads, in one-letter code: MRVLVAMSGGVDSSVAAARMVDAGHDVVGVHLALSATPGTLRTGSRGCCSKEDAGDARRVADVLDIPFYVWDFADRFKEDVIDDFVASYERGETPNPCVRCNEKIKFSALAGRALALGFDALATGHYARLSDGRLRRAVDADKDQSYVLAVLTAQQLRHAVFPIGDTPKAQIRAEAAERGLAVADKPDSHDICFIPSGDTRAFLGARIGVRRGAVVDAGGTKLAEHEGVHGFTIGQRKGLGIAGPGPDGQPRYVTGIDAATGTVRVGGAEDLDVWRLTGERPVFTSGAAFGGPVECQVQVRAHGGLADAVASHDAGVLSVELRAPLRGVAAGQTMVIYRPDPEGDEVLASATISGADGR.

ATP-binding positions include 6 to 13 (AMSGGVDS) and L32. The active-site Nucleophile is C101. C101 and C193 are joined by a disulfide. G125 contacts ATP. Residues 143-145 (KDQ) are interaction with tRNA. C193 serves as the catalytic Cysteine persulfide intermediate.

Belongs to the MnmA/TRMU family.

It is found in the cytoplasm. It catalyses the reaction S-sulfanyl-L-cysteinyl-[protein] + uridine(34) in tRNA + AH2 + ATP = 2-thiouridine(34) in tRNA + L-cysteinyl-[protein] + A + AMP + diphosphate + H(+). In terms of biological role, catalyzes the 2-thiolation of uridine at the wobble position (U34) of tRNA, leading to the formation of s(2)U34. This chain is tRNA-specific 2-thiouridylase MnmA, found in Mycobacterium sp. (strain KMS).